The chain runs to 932 residues: DNA mismatch repair protein MutS (932 aa).

Residue 615-622 participates in ATP binding; that stretch reads GPNMAGKS.

This sequence belongs to the DNA mismatch repair MutS family.

Its function is as follows. This protein is involved in the repair of mismatches in DNA. It is possible that it carries out the mismatch recognition step. This protein has a weak ATPase activity. This Clostridium botulinum (strain Kyoto / Type A2) protein is DNA mismatch repair protein MutS.